We begin with the raw amino-acid sequence, 150 residues long: Large ribosomal subunit protein bL9 (150 aa).

This sequence belongs to the bacterial ribosomal protein bL9 family.

Binds to the 23S rRNA. This chain is Large ribosomal subunit protein bL9, found in Saccharopolyspora erythraea (strain ATCC 11635 / DSM 40517 / JCM 4748 / NBRC 13426 / NCIMB 8594 / NRRL 2338).